The primary structure comprises 465 residues: MMLLTLLILSSVGLAAAADPSLFSENDYSPDNIVNRDVLIVGGGAAGTHAAVRLKDLGKSFTLVEKSSVLGGHTHTYIDPTTGTPVEFGVHSFGNTSDTRDFFARFEIPLVDFVPARFPVHYIDFNTGDAVAVALDTNVTGYLDQVEKYPSLAYGWLTSFPVPSDLLLSFGDFVNKYSLQKIVYTIYYLGVGIGNILQQLTITVMNSVGVGILSGLQGVPGGAVVPAAGNNHAIFDKALAELRADILLNSHVVAASRPANNSGVKVVVQTPNSRKLVLAKRIIVAVLTQPENMNVFSPDEREARLFSQLKGQAFYVGLVTNTGLPVNQSYYNAASSEPDNVPLLPKTYNIQSTVLPGVFWWLYGSETALTEAAVKTAVTSQIATVRRALNVPAPAGSPQFLAFGNHTPTHVTVPAEAIASGFYRDLYGLQGYRNTWYTGAQFIDSASGIWNLTNAVVLPGLLTGL.

Positions 1-17 (MMLLTLLILSSVGLAAA) are cleaved as a signal peptide. 4 N-linked (GlcNAc...) asparagine glycosylation sites follow: N95, N138, N260, and N327. Residue D444 is the site of GPI-anchor amidated aspartate attachment. Positions 445-465 (SASGIWNLTNAVVLPGLLTGL) are cleaved as a propeptide — removed in mature form. N451 carries an N-linked (GlcNAc...) asparagine glycan.

This sequence belongs to the beta-cyclopiazonate dehydrogenase family. The cofactor is FAD.

Its subcellular location is the cell membrane. It functions in the pathway secondary metabolite biosynthesis. In terms of biological role, FAD-dependent oxidoreductase; part of the gene cluster that mediates the biosynthesis of azaphilone pigments (MonAzPs), a complex mixture of compounds with a common azaphilone skeleton very widely used as food colorants. Within the pathway, pigF desaturates C6(7) to afford the orange and red pigments from yellow pigments. The first step of the pathway is performed by the nrPKS pigA that forms the hexaketide precursor from successive condensations of five malonyl-CoA units, with a simple acetyl-CoA starter unit. The role of esterase pigG is not clear, but it may play at most a supplementary role in the formation of the benzaldehyde produced by the pigA nrPKS. This very reactive benzaldehyde is intercepted by the pigC ketoreductase that to provide the first stable enzyme-free MonAzPs intermediate, 6-(4-hydroxy-2-oxopentyl)-3-methyl-2,4-dioxocyclohexane carbaldehyde, also known as M7PKS-1. The FAD-dependent monooxygenase pigN hydroxylates M7PKS-1 at C-4, which triggers the formation of the pyran ring. PigJ, pigK and pigD are involved in the acetylation of the pyran ring. PigJ and pigK form the two subunits of a dedicated fungal FAS that produces the side chain fatty acyl moiety of MonAzPs and pigD transfers the fatty acyl chain to the C-4 alcohol. PigM and pigO are involved in the elimination of the omega-1 alcohol. PigM acts as an O-acetyltransferase that synthesizes the putative O-11 acetyl intermediate whereas pigO eliminates acetic acid to yield an intermediate with a C10(11) double bond. The dehydration of the C-11 alcohol followed by the reduction of the C6(7) double bond by the NAD(P)H-dependent oxidoreductase pigE increases the electrophilicity of the C-5 ketone of the resulting acyl benzopyran. This in turn sets up the C-5 ketone for an intramolecular Knoevenagel aldol condensation with the C-20 enol of the side chain. This condensation affords the characteristic linear tricyclic carbon skeletons of the yellow pigments that serve as the common precursors for the classical yellow pigments monascin and ankaflavin, orange pigments rubopunctatin and monascorubrin, and red pigments ribropunctamine and monascorubramine. The FAD-dependent oxidoreductase pigF is especially invoved in the biosynthesis of orange and red pigments via desaturation of C6(7). This is FAD-dependent oxidoreductase pigF from Monascus ruber (Mold).